A 97-amino-acid polypeptide reads, in one-letter code: Protein RnfH (97 aa).

It belongs to the UPF0125 (RnfH) family.

This chain is Protein RnfH, found in Paramagnetospirillum magneticum (strain ATCC 700264 / AMB-1) (Magnetospirillum magneticum).